An 802-amino-acid polypeptide reads, in one-letter code: Phenylalanine--tRNA ligase beta subunit (802 aa).

The region spanning 39-150 (AKALKPFTIA…ADAPIGAAYA (112 aa)) is the tRNA-binding domain. Residues 400–475 (GDDRVIDFPV…RIYGVDKVPM (76 aa)) enclose the B5 domain. Mg(2+)-binding residues include aspartate 453, aspartate 459, glutamate 462, and glutamate 463. Residues 708 to 801 (SAFQPVSRDF…VTKKTGGTLR (94 aa)) form the FDX-ACB domain.

It belongs to the phenylalanyl-tRNA synthetase beta subunit family. Type 1 subfamily. In terms of assembly, tetramer of two alpha and two beta subunits. Requires Mg(2+) as cofactor.

The protein localises to the cytoplasm. The catalysed reaction is tRNA(Phe) + L-phenylalanine + ATP = L-phenylalanyl-tRNA(Phe) + AMP + diphosphate + H(+). The polypeptide is Phenylalanine--tRNA ligase beta subunit (Bradyrhizobium diazoefficiens (strain JCM 10833 / BCRC 13528 / IAM 13628 / NBRC 14792 / USDA 110)).